The following is a 648-amino-acid chain: Threonine--tRNA ligase (648 aa).

The region spanning 1–61 (MIKITLPDGS…TTDGNLILYT (61 aa)) is the TGS domain. The segment at 240–539 (DHRKLGKELE…LLEHTAGNFP (300 aa)) is catalytic. Residues cysteine 335, histidine 386, and histidine 516 each coordinate Zn(2+).

Belongs to the class-II aminoacyl-tRNA synthetase family. In terms of assembly, homodimer. It depends on Zn(2+) as a cofactor.

It is found in the cytoplasm. It carries out the reaction tRNA(Thr) + L-threonine + ATP = L-threonyl-tRNA(Thr) + AMP + diphosphate + H(+). Functionally, catalyzes the attachment of threonine to tRNA(Thr) in a two-step reaction: L-threonine is first activated by ATP to form Thr-AMP and then transferred to the acceptor end of tRNA(Thr). Also edits incorrectly charged L-seryl-tRNA(Thr). The chain is Threonine--tRNA ligase from Flavobacterium johnsoniae (strain ATCC 17061 / DSM 2064 / JCM 8514 / BCRC 14874 / CCUG 350202 / NBRC 14942 / NCIMB 11054 / UW101) (Cytophaga johnsonae).